The chain runs to 201 residues: MTPTGLGYIPMVVEQSGRGERAYDIYSRLLRERLIFLVGPVNDATANLVVAQLLFLESENPDKDISFYINSPGGSVYAGMAIFDTMQFVKPDVSTLCTGLAASMGAFLLAAGKKGKRFSLPNSRIMIHQPSGGAQGQASDIQIQAKEILDLRERLNRILAENTGQSMERIAIDTERDTFMSAEDALSYGLVDKVLARREDV.

The active-site Nucleophile is the serine 103. Residue histidine 128 is part of the active site.

The protein belongs to the peptidase S14 family. Fourteen ClpP subunits assemble into 2 heptameric rings which stack back to back to give a disk-like structure with a central cavity, resembling the structure of eukaryotic proteasomes.

It localises to the cytoplasm. It carries out the reaction Hydrolysis of proteins to small peptides in the presence of ATP and magnesium. alpha-casein is the usual test substrate. In the absence of ATP, only oligopeptides shorter than five residues are hydrolyzed (such as succinyl-Leu-Tyr-|-NHMec, and Leu-Tyr-Leu-|-Tyr-Trp, in which cleavage of the -Tyr-|-Leu- and -Tyr-|-Trp bonds also occurs).. Cleaves peptides in various proteins in a process that requires ATP hydrolysis. Has a chymotrypsin-like activity. Plays a major role in the degradation of misfolded proteins. The polypeptide is ATP-dependent Clp protease proteolytic subunit (Bordetella avium (strain 197N)).